The primary structure comprises 130 residues: Protein ApaG (130 aa).

Residues 3 to 127 (RALTKDIEVV…FSLDSPGLLR (125 aa)) form the ApaG domain.

This chain is Protein ApaG, found in Rhizobium leguminosarum bv. trifolii (strain WSM2304).